The chain runs to 196 residues: Vacuolar iron transporter homolog 2 (196 aa).

Topologically, residues 1 to 31 (MDQSGSNTNMDIEKESTTFDYSKRSQWLRAA) are cytoplasmic. The chain crosses the membrane as a helical span at residues 32 to 52 (VLGANDGLVSTASLMMGVGAV). Residues 53-59 (KHDVKAM) lie on the Vacuolar side of the membrane. The chain crosses the membrane as a helical span at residues 60–80 (ILSGFAGMVAGACSMAIGEFV). Residues 81–112 (SVYSQYDIEVAQMERDSVEIEKEKLPSPMQAA) lie on the Cytoplasmic side of the membrane. A helical membrane pass occupies residues 113 to 133 (AASALAFSAGAIVPLLAAAFV). Residues 134–139 (KEYKMR) lie on the Vacuolar side of the membrane. A helical membrane pass occupies residues 140 to 160 (IISVVVAVTVALMVFGWLGAA). The Cytoplasmic segment spans residues 161–172 (LGKAPAVRSSAR). The helical transmembrane segment at 173–193 (VLFGGWLAMAVTFGLTKLIGL) threads the bilayer. Residues 194–196 (YGL) lie on the Vacuolar side of the membrane.

This sequence belongs to the CCC1 family. As to expression, expressed in roots, leaves and inflorescences.

It localises to the vacuole membrane. It catalyses the reaction Fe(2+)(in) = Fe(2+)(out). Vacuolar iron transporter involved in the transfer of iron ions from the cytosol to the vacuole for intracellular iron storage. Involved in regulation of cellular iron homeostasis. Vacuolar iron storage is required for seed embryo and seedling development. The protein is Vacuolar iron transporter homolog 2 of Arabidopsis thaliana (Mouse-ear cress).